Consider the following 371-residue polypeptide: Chorismate synthase (371 aa).

The NADP(+) site is built by R48 and R54. FMN contacts are provided by residues 131–133 (RSS), 245–246 (NA), G290, 305–309 (KPTSS), and R331.

The protein belongs to the chorismate synthase family. Homotetramer. FMNH2 is required as a cofactor.

It catalyses the reaction 5-O-(1-carboxyvinyl)-3-phosphoshikimate = chorismate + phosphate. It functions in the pathway metabolic intermediate biosynthesis; chorismate biosynthesis; chorismate from D-erythrose 4-phosphate and phosphoenolpyruvate: step 7/7. Its function is as follows. Catalyzes the anti-1,4-elimination of the C-3 phosphate and the C-6 proR hydrogen from 5-enolpyruvylshikimate-3-phosphate (EPSP) to yield chorismate, which is the branch point compound that serves as the starting substrate for the three terminal pathways of aromatic amino acid biosynthesis. This reaction introduces a second double bond into the aromatic ring system. This is Chorismate synthase from Mesorhizobium japonicum (strain LMG 29417 / CECT 9101 / MAFF 303099) (Mesorhizobium loti (strain MAFF 303099)).